The following is a 413-amino-acid chain: Arginine biosynthesis bifunctional protein ArgJ (413 aa).

Substrate-binding residues include Thr-160, Lys-186, Thr-197, Glu-277, Asn-408, and Thr-413. Thr-197 functions as the Nucleophile in the catalytic mechanism.

This sequence belongs to the ArgJ family. Heterotetramer of two alpha and two beta chains.

It localises to the cytoplasm. The enzyme catalyses N(2)-acetyl-L-ornithine + L-glutamate = N-acetyl-L-glutamate + L-ornithine. It catalyses the reaction L-glutamate + acetyl-CoA = N-acetyl-L-glutamate + CoA + H(+). The protein operates within amino-acid biosynthesis; L-arginine biosynthesis; L-ornithine and N-acetyl-L-glutamate from L-glutamate and N(2)-acetyl-L-ornithine (cyclic): step 1/1. It participates in amino-acid biosynthesis; L-arginine biosynthesis; N(2)-acetyl-L-ornithine from L-glutamate: step 1/4. Its function is as follows. Catalyzes two activities which are involved in the cyclic version of arginine biosynthesis: the synthesis of N-acetylglutamate from glutamate and acetyl-CoA as the acetyl donor, and of ornithine by transacetylation between N(2)-acetylornithine and glutamate. This is Arginine biosynthesis bifunctional protein ArgJ from Prochlorococcus marinus (strain SARG / CCMP1375 / SS120).